The following is a 164-amino-acid chain: DNA-binding protein inhibitor ID-1 (164 aa).

One can recognise a bHLH domain in the interval 46-98; sequence LPALLDEQQVNVLLYDMNGCYSRLKELVPTLPQNRKVSKVEILQHVIDYIRDL. The Nuclear export signal signature appears at 91-104; that stretch reads VIDYIRDLQLELNS.

In terms of assembly, heterodimer with other HLH proteins. Interacts with COPS5, IFI204, GATA4, NKX2-5, CLOCK and BMAL1. Isoform Short can form homodimers. In terms of processing, phosphorylated in vitro by PKA and PKC.

The protein localises to the cytoplasm. The protein resides in the nucleus. Functionally, transcriptional regulator (lacking a basic DNA binding domain) which negatively regulates the basic helix-loop-helix (bHLH) transcription factors by forming heterodimers and inhibiting their DNA binding and transcriptional activity. Implicated in regulating a variety of cellular processes, including cellular growth, senescence, differentiation, apoptosis, angiogenesis, and neoplastic transformation. Inhibits skeletal muscle and cardiac myocyte differentiation. Regulates the circadian clock by repressing the transcriptional activator activity of the CLOCK-BMAL1 heterodimer. In Rattus norvegicus (Rat), this protein is DNA-binding protein inhibitor ID-1 (Id1).